The sequence spans 21 residues: Dahlein-5.4 (21 aa).

As to expression, expressed by the skin dorsal glands.

It is found in the secreted. Functionally, has no antimicrobial activity. Strongly inhibits the formation of NO by neuronal nitric oxide synthase at micromolar concentrations. The polypeptide is Dahlein-5.4 (Ranoidea dahlii (Dahl's aquatic frog)).